We begin with the raw amino-acid sequence, 704 residues long: Elongation factor G (704 aa).

Residues 8-290 (EKYRNIGICA…GVVRYLPAPN (283 aa)) form the tr-type G domain. GTP is bound by residues 17 to 24 (AHVDAGKT), 88 to 92 (DTPGH), and 142 to 145 (NKMD).

This sequence belongs to the TRAFAC class translation factor GTPase superfamily. Classic translation factor GTPase family. EF-G/EF-2 subfamily.

The protein localises to the cytoplasm. In terms of biological role, catalyzes the GTP-dependent ribosomal translocation step during translation elongation. During this step, the ribosome changes from the pre-translocational (PRE) to the post-translocational (POST) state as the newly formed A-site-bound peptidyl-tRNA and P-site-bound deacylated tRNA move to the P and E sites, respectively. Catalyzes the coordinated movement of the two tRNA molecules, the mRNA and conformational changes in the ribosome. The sequence is that of Elongation factor G from Francisella tularensis subsp. mediasiatica (strain FSC147).